We begin with the raw amino-acid sequence, 416 residues long: GTPase Obg (416 aa).

Positions 1-157 (MFQDVLVITV…RRLRLELMLI (157 aa)) constitute an Obg domain. 2 disordered regions span residues 25-44 (EKFV…GGSV) and 62-82 (TYKA…RGGE). Residues 32–42 (GPDGGDGGRGG) show a composition bias toward gly residues. Residues 63 to 72 (YKAEDGEHGR) show a composition bias toward basic and acidic residues. One can recognise an OBG-type G domain in the interval 158–324 (ADVGLVGYPN…LKEALHALVR (167 aa)). Residues 164–171 (GYPNAGKS), 189–193 (FTTLS), 211–214 (DIPG), 277–280 (NKVD), and 305–307 (SAL) each bind GTP. Residues serine 171 and threonine 191 each coordinate Mg(2+). Residues 336-414 (PRKEVQAGVE…IGGLEFEYIP (79 aa)) enclose the OCT domain.

The protein belongs to the TRAFAC class OBG-HflX-like GTPase superfamily. OBG GTPase family. As to quaternary structure, monomer. Mg(2+) is required as a cofactor.

It localises to the cytoplasm. Functionally, an essential GTPase which binds GTP, GDP and possibly (p)ppGpp with moderate affinity, with high nucleotide exchange rates and a fairly low GTP hydrolysis rate. Plays a role in control of the cell cycle, stress response, ribosome biogenesis and in those bacteria that undergo differentiation, in morphogenesis control. This is GTPase Obg from Thermus thermophilus (strain ATCC 27634 / DSM 579 / HB8).